A 232-amino-acid chain; its full sequence is Large ribosomal subunit protein uL1 (232 aa).

The protein belongs to the universal ribosomal protein uL1 family. Part of the 50S ribosomal subunit.

Its function is as follows. Binds directly to 23S rRNA. The L1 stalk is quite mobile in the ribosome, and is involved in E site tRNA release. Protein L1 is also a translational repressor protein, it controls the translation of the L11 operon by binding to its mRNA. The sequence is that of Large ribosomal subunit protein uL1 from Maricaulis maris (strain MCS10) (Caulobacter maris).